We begin with the raw amino-acid sequence, 487 residues long: L-tartrate/succinate antiporter (487 aa).

14 consecutive transmembrane segments (helical) span residues 10–30 (YLAPLAVIAIIALIPVPAGLE), 33–53 (TWLYFAVFTGVIVGLILEPVP), 54–74 (GAVVAMVGISIIAILSPWLLF), 93–113 (WAVSGFSNSVIWLIFAAFMFG), 137–157 (TLFLGYAVMFSELILAPVTPS), 189–209 (IGSYIMWMGIVADCVTSAIFL), 236–256 (FLGMLPLSILLVLLVPWLAYV), 292–312 (LMVGALVLWIFGGDYIDAAMV), 313–333 (GYSVVALMLLLRIISWDDIVS), 340–360 (VFFWLASLITLATGLNNTGFI), 370–390 (SLSGYSPTMVMVALIVVFYLL), 393–413 (FFASATAYTSALAPMMIAAAL), 418–438 (IPLPVFCLMVGAAIGLGSILT), and 465–485 (IFGLIFLVLLVITGLLWMPVV).

It belongs to the SLC13A/DASS transporter (TC 2.A.47) family. DIT1 subfamily.

Its subcellular location is the cell inner membrane. It carries out the reaction (2R,3R)-tartrate(out) + succinate(in) = (2R,3R)-tartrate(in) + succinate(out). Functionally, catalyzes the uptake of tartrate in exchange for intracellular succinate. Essential for anaerobic L-tartrate fermentation. In Escherichia coli O157:H7, this protein is L-tartrate/succinate antiporter (ttdT).